Here is a 47-residue protein sequence, read N- to C-terminus: Large ribosomal subunit protein bL34 (47 aa).

Belongs to the bacterial ribosomal protein bL34 family.

In Corynebacterium glutamicum (strain R), this protein is Large ribosomal subunit protein bL34.